Consider the following 254-residue polypeptide: Urease accessory protein UreF (254 aa).

Basic and acidic residues predominate over residues 1-11; the sequence is MDKGKSVKSTE. Positions 1 to 26 are disordered; it reads MDKGKSVKSTEKSVGMPPKTPKTDNN.

Belongs to the UreF family. In terms of assembly, ureH, UreF and UreG form a complex that acts as a GTP-hydrolysis-dependent molecular chaperone, activating the urease apoprotein by helping to assemble the nickel containing metallocenter of UreC. The UreE protein probably delivers the nickel.

The protein localises to the cytoplasm. In terms of biological role, required for maturation of urease via the functional incorporation of the urease nickel metallocenter. The sequence is that of Urease accessory protein UreF from Helicobacter pylori (strain ATCC 700392 / 26695) (Campylobacter pylori).